Here is a 316-residue protein sequence, read N- to C-terminus: Cytochrome c oxidase assembly protein COX18, mitochondrial (316 aa).

The chain crosses the membrane as a helical span at residues 164–184; that stretch reads WKNALLPMVQIPLWVTVSMGI. Residues 185-213 lie on the Mitochondrial matrix side of the membrane; the sequence is RTLTETQLIESFYPSWFSALGFSSFDLSS. A helical membrane pass occupies residues 214 to 234; the sequence is PLVAMPLLAPILVGTLAVLNV. Residues 235 to 274 are Mitochondrial intermembrane-facing; that stretch reads ELNGRLMFSSSLSSQGIKTISRNSTRVQEAMTSILNVSRL. A helical membrane pass occupies residues 275 to 295; it reads GCVVMLAMSSQAPFLLSLYWI. Residues 296 to 316 are Mitochondrial matrix-facing; the sequence is SSQLFSLVQNIILNWIYPYQR.

This sequence belongs to the OXA1/ALB3/YidC family. As to quaternary structure, interacts with PNT1 and MSS2.

It localises to the mitochondrion inner membrane. Its function is as follows. Required for the insertion of integral membrane proteins into the mitochondrial inner membrane. Essential for the activity and assembly of cytochrome c oxidase. Plays a central role in the translocation and export of the C-terminal part of the COX2 protein into the mitochondrial intermembrane space. In Saccharomyces cerevisiae (strain ATCC 204508 / S288c) (Baker's yeast), this protein is Cytochrome c oxidase assembly protein COX18, mitochondrial (COX18).